Reading from the N-terminus, the 97-residue chain is Co-chaperonin GroES (97 aa).

It belongs to the GroES chaperonin family. As to quaternary structure, heptamer of 7 subunits arranged in a ring. Interacts with the chaperonin GroEL.

The protein localises to the cytoplasm. In terms of biological role, together with the chaperonin GroEL, plays an essential role in assisting protein folding. The GroEL-GroES system forms a nano-cage that allows encapsulation of the non-native substrate proteins and provides a physical environment optimized to promote and accelerate protein folding. GroES binds to the apical surface of the GroEL ring, thereby capping the opening of the GroEL channel. This chain is Co-chaperonin GroES, found in Pseudomonas savastanoi pv. phaseolicola (strain 1448A / Race 6) (Pseudomonas syringae pv. phaseolicola (strain 1448A / Race 6)).